The sequence spans 76 residues: HEHSSDESSESSKPCCDLCTCTKSIPPQCHCNDMRLNSCHSACKSCICALSEPAQCFCVDTTDFCYKSCHNNAEKD.

7 cysteine pairs are disulfide-bonded: C15–C69, C16–C31, C19–C65, C21–C29, C39–C46, C43–C58, and C48–C56.

It belongs to the Bowman-Birk serine protease inhibitor family.

This Macrotyloma axillare (Perennial horse gram) protein is Bowman-Birk type proteinase inhibitor DE-4.